The sequence spans 395 residues: Elongation factor Tu (395 aa).

In terms of domain architecture, tr-type G spans 10 to 204; sequence KPHVNIGTIG…TVDSYIPEPK (195 aa). The segment at 19–26 is G1; it reads GHVDHGKT. 19–26 is a GTP binding site; the sequence is GHVDHGKT. Residue T26 coordinates Mg(2+). Positions 60 to 64 are G2; that stretch reads GITIN. Residues 81–84 are G3; sequence DAPG. GTP contacts are provided by residues 81 to 85 and 136 to 139; these read DAPGH and NKTD. A G4 region spans residues 136 to 139; that stretch reads NKTD. The interval 174–176 is G5; it reads SAL.

This sequence belongs to the TRAFAC class translation factor GTPase superfamily. Classic translation factor GTPase family. EF-Tu/EF-1A subfamily. In terms of assembly, monomer.

Its subcellular location is the cytoplasm. The catalysed reaction is GTP + H2O = GDP + phosphate + H(+). Its function is as follows. GTP hydrolase that promotes the GTP-dependent binding of aminoacyl-tRNA to the A-site of ribosomes during protein biosynthesis. The polypeptide is Elongation factor Tu (Leuconostoc citreum (strain KM20)).